A 301-amino-acid polypeptide reads, in one-letter code: Ribosomal RNA small subunit methyltransferase H (301 aa).

S-adenosyl-L-methionine-binding positions include 33–35, aspartate 52, phenylalanine 79, aspartate 100, and glutamine 107; that span reads GGH.

It belongs to the methyltransferase superfamily. RsmH family.

It is found in the cytoplasm. It catalyses the reaction cytidine(1402) in 16S rRNA + S-adenosyl-L-methionine = N(4)-methylcytidine(1402) in 16S rRNA + S-adenosyl-L-homocysteine + H(+). In terms of biological role, specifically methylates the N4 position of cytidine in position 1402 (C1402) of 16S rRNA. The sequence is that of Ribosomal RNA small subunit methyltransferase H from Mycoplasmopsis synoviae (strain 53) (Mycoplasma synoviae).